Here is a 463-residue protein sequence, read N- to C-terminus: Perilipin-5 (463 aa).

A disordered region spans residues 1–32 (MDQRGEDTTLAPHSRMSGDQTAQDPGSSLGEL). The interval 1–123 (MDQRGEDTTL…KLEEKLPFLQ (123 aa)) is interaction with LIPE. The tract at residues 1–188 (MDQRGEDTTL…RFLPMTEAEL (188 aa)) is essential for lipid droplet targeting. Phosphoserine is present on residues S17, S163, and S337. Residues 17-26 (SGDQTAQDPG) show a composition bias toward polar residues. Positions 200 to 463 (VGTVEEQRQQ…KHTMMPELDF (264 aa)) are interaction with PNPLA2 and ABHD5. Residues 433–463 (AWEAESADPGGQEAEPPRGQGKHTMMPELDF) are disordered. Residues 444–463 (QEAEPPRGQGKHTMMPELDF) are necessary for mitochondria recruitment at the lipid droplet surface.

This sequence belongs to the perilipin family. In terms of assembly, homooligomer. Interacts with PNPLA2; prevents interaction of PNPLA2 with ABHD5. Interacts with ABHD5; targets ABHD5 to lipid droplets and promotes interaction of ABHD5 with PNPLA2. Interacts with LIPE. Phosphorylated by PKA. Phosphorylated on serine in skeletal muscle at rest or with lipolytic stimulation. As to expression, highly expressed in oxidative tissues, including heart, liver, brown adipose tissue (BAT) and slow-twitch fibers of skeletal muscle. Lower expression in epididymal white adipose tissue and anterior tibialis and quadriceps. Expressed in adrenal glands. Isoform 2 has the highest expression in heart.

It is found in the lipid droplet. The protein localises to the cytoplasm. The protein resides in the mitochondrion. In terms of biological role, lipid droplet-associated protein that maintains the balance between lipogenesis and lipolysis and also regulates fatty acid oxidation in oxidative tissues. Recruits mitochondria to the surface of lipid droplets and is involved in lipid droplet homeostasis by regulating both the storage of fatty acids in the form of triglycerides and the release of fatty acids for mitochondrial fatty acid oxidation. In lipid droplet triacylglycerol hydrolysis, plays a role as a scaffolding protein for three major key lipolytic players: ABHD5, PNPLA2 and LIPE. Reduces the triacylglycerol hydrolase activity of PNPLA2 by recruiting and sequestering PNPLA2 to lipid droplets. Phosphorylation by PKA enables lipolysis probably by promoting release of ABHD5 from the perilipin scaffold and by facilitating interaction of ABHD5 with PNPLA2. Also increases lipolysis through interaction with LIPE and upon PKA-mediated phosphorylation of LIPE. The chain is Perilipin-5 (Plin5) from Mus musculus (Mouse).